A 215-amino-acid polypeptide reads, in one-letter code: Pyridoxine/pyridoxamine 5'-phosphate oxidase (215 aa).

Substrate is bound by residues 9-12 and Lys-69; that span reads RRDY. FMN-binding positions include 64-69, 79-80, Lys-86, and Gln-108; these read RVLLLK and FT. Residues Tyr-126, Arg-130, and Ser-134 each contribute to the substrate site. FMN-binding positions include 143–144 and Trp-188; that span reads QS. 194–196 provides a ligand contact to substrate; sequence RLH. An FMN-binding site is contributed by Arg-198.

Belongs to the pyridoxamine 5'-phosphate oxidase family. As to quaternary structure, homodimer. It depends on FMN as a cofactor.

It carries out the reaction pyridoxamine 5'-phosphate + O2 + H2O = pyridoxal 5'-phosphate + H2O2 + NH4(+). The enzyme catalyses pyridoxine 5'-phosphate + O2 = pyridoxal 5'-phosphate + H2O2. It functions in the pathway cofactor metabolism; pyridoxal 5'-phosphate salvage; pyridoxal 5'-phosphate from pyridoxamine 5'-phosphate: step 1/1. The protein operates within cofactor metabolism; pyridoxal 5'-phosphate salvage; pyridoxal 5'-phosphate from pyridoxine 5'-phosphate: step 1/1. Functionally, catalyzes the oxidation of either pyridoxine 5'-phosphate (PNP) or pyridoxamine 5'-phosphate (PMP) into pyridoxal 5'-phosphate (PLP). This is Pyridoxine/pyridoxamine 5'-phosphate oxidase from Pseudomonas savastanoi pv. phaseolicola (strain 1448A / Race 6) (Pseudomonas syringae pv. phaseolicola (strain 1448A / Race 6)).